We begin with the raw amino-acid sequence, 394 residues long: Actin-related protein 2 (394 aa).

Residues Gly160–Gly162, Arg214–Glu218, and Gly305–Tyr310 contribute to the ATP site.

Belongs to the actin family. ARP2 subfamily. As to quaternary structure, component of the Arp2/3 complex composed of ACTR2/ARP2, ACTR3/ARP3, ARPC1B/p41-ARC, ARPC2/p34-ARC, ARPC3/p21-ARC, ARPC4/p20-ARC and ARPC5/p16-ARC.

It is found in the cytoplasm. Its subcellular location is the cytoskeleton. It localises to the cell projection. The protein resides in the nucleus. In terms of biological role, ATP-binding component of the Arp2/3 complex, a multiprotein complex that mediates actin polymerization upon stimulation by nucleation-promoting factor (NPF). The Arp2/3 complex mediates the formation of branched actin networks in the cytoplasm, providing the force for cell motility. Seems to contact the pointed end of the daughter actin filament. In addition to its role in the cytoplasmic cytoskeleton, the Arp2/3 complex also promotes actin polymerization in the nucleus, thereby regulating gene transcription and repair of damaged DNA. The Arp2/3 complex promotes homologous recombination (HR) repair in response to DNA damage by promoting nuclear actin polymerization, leading to drive motility of double-strand breaks (DSBs). This is Actin-related protein 2 (ACTR2) from Gallus gallus (Chicken).